A 300-amino-acid polypeptide reads, in one-letter code: 4-hydroxy-tetrahydrodipicolinate synthase (300 aa).

Residue threonine 53 participates in pyruvate binding. The Proton donor/acceptor role is filled by tyrosine 141. Lysine 169 acts as the Schiff-base intermediate with substrate in catalysis. Threonine 211 serves as a coordination point for pyruvate.

It belongs to the DapA family. In terms of assembly, homotetramer; dimer of dimers.

The protein localises to the cytoplasm. It carries out the reaction L-aspartate 4-semialdehyde + pyruvate = (2S,4S)-4-hydroxy-2,3,4,5-tetrahydrodipicolinate + H2O + H(+). It participates in amino-acid biosynthesis; L-lysine biosynthesis via DAP pathway; (S)-tetrahydrodipicolinate from L-aspartate: step 3/4. Functionally, catalyzes the condensation of (S)-aspartate-beta-semialdehyde [(S)-ASA] and pyruvate to 4-hydroxy-tetrahydrodipicolinate (HTPA). This Rickettsia massiliae (strain Mtu5) protein is 4-hydroxy-tetrahydrodipicolinate synthase.